Here is a 387-residue protein sequence, read N- to C-terminus: Cytochrome b (387 aa).

4 helical membrane-spanning segments follow: residues 32–52 (FGSLLALCLGIQIVTGVTLAM), 76–98 (WLVRYLHSNTASAFFFLVYLHIG), 113–133 (TWAIGTVILIVMMATAFLGYV), and 179–199 (FFALHFLLPFVLAALALMHLI). Heme b contacts are provided by His82 and His96. His183 and His197 together coordinate heme b. His202 contributes to the a ubiquinone binding site. A run of 4 helical transmembrane segments spans residues 226 to 246 (FIFKDLITIFIFFIVLSIFVF), 290 to 310 (LLGVIAMFAAILALMVMPITD), 322 to 342 (LSKVVFYIFVANFLILMQIGA), and 349 to 369 (FIEFGQISTIIYFAYFFVIVP).

This sequence belongs to the cytochrome b family. In terms of assembly, fungal cytochrome b-c1 complex contains 10 subunits; 3 respiratory subunits, 2 core proteins and 5 low-molecular weight proteins. Cytochrome b-c1 complex is a homodimer. Requires heme b as cofactor.

Its subcellular location is the mitochondrion inner membrane. In terms of biological role, component of the ubiquinol-cytochrome c reductase complex (complex III or cytochrome b-c1 complex) that is part of the mitochondrial respiratory chain. The b-c1 complex mediates electron transfer from ubiquinol to cytochrome c. Contributes to the generation of a proton gradient across the mitochondrial membrane that is then used for ATP synthesis. This is Cytochrome b (cob) from Emericella nidulans (Aspergillus nidulans).